Consider the following 67-residue polypeptide: MKQKLKTKSGAKKRFRFSKTGKVKFAHAFGSHKFLSKRPDTKRKYRKARIADDTNMLEMPRLMPYGR.

Belongs to the bacterial ribosomal protein bL35 family.

This Brachyspira hyodysenteriae (strain ATCC 49526 / WA1) protein is Large ribosomal subunit protein bL35.